A 523-amino-acid polypeptide reads, in one-letter code: Calcium and calcium/calmodulin-dependent serine/threonine-protein kinase DMI-3 (523 aa).

The 295-residue stretch at 12–306 (YEVSEILGRG…ALELLSDPWV (295 aa)) folds into the Protein kinase domain. ATP contacts are provided by residues 18–26 (LGRGGFSVV) and lysine 47. The active-site Proton acceptor is the aspartate 171. Phosphothreonine is present on threonine 271. Residues 329-342 (ARRKLRAAAIASVW) are calmodulin-binding. EF-hand domains lie at 400–435 (SLIP…LKNS), 436–471 (KGED…LPYD), and 478–513 (TEPG…DSSL). Ca(2+) contacts are provided by aspartate 413, asparagine 415, aspartate 417, threonine 419, glutamate 424, aspartate 449, aspartate 451, serine 453, cysteine 455, glutamate 460, aspartate 491, asparagine 493, aspartate 495, lysine 497, and glutamate 502.

Belongs to the protein kinase superfamily. CAMK Ser/Thr protein kinase family. CaMK subfamily. As to quaternary structure, interacts with IPD3. In terms of processing, autophosphorylation. As to expression, highly expressed in roots. Expressed in root hairs and nodules. Expressed at low levels in flowers. Not detected in leaves or stems.

It localises to the nucleus. It carries out the reaction L-seryl-[protein] + ATP = O-phospho-L-seryl-[protein] + ADP + H(+). The catalysed reaction is L-threonyl-[protein] + ATP = O-phospho-L-threonyl-[protein] + ADP + H(+). Activated by calcium. Autophosphorylation may play an important role in the regulation of the kinase activity. In terms of biological role, during nodulation, plays a central role in bacterial infection and contributes to nodule organogenesis. Protein kinase that recognizes the calcium spiking induced by Nod factors and translates this signal to components controlling nodulation and mycorrhizal infection responses. May phosphorylate the NSP1 protein. Required in epidermal and cortical cells to promote infection thread (IT) formation in root hairs. This chain is Calcium and calcium/calmodulin-dependent serine/threonine-protein kinase DMI-3, found in Medicago truncatula (Barrel medic).